Reading from the N-terminus, the 323-residue chain is Cytosolic sulfotransferase 5 (323 aa).

69 to 74 (KCGTTW) is a binding site for 3'-phosphoadenylyl sulfate. His-135 (proton acceptor) is an active-site residue. 3'-phosphoadenylyl sulfate is bound by residues Arg-157, Ser-165, and 289-291 (RKG).

The protein belongs to the sulfotransferase 1 family. As to expression, expressed in inflorescence stems, roots and siliques.

The protein resides in the cytoplasm. In terms of biological role, sulfotransferase that utilizes 3'-phospho-5'-adenylyl sulfate (PAPS) as sulfonate donor to specifically catalyze the sulfate conjugation of flavones and flavonols. Strictly specific for the position 7. Substrate preference is kaempferol 3-sulfate &gt; isorhamnetin &gt; kaempferol. The sequence is that of Cytosolic sulfotransferase 5 (SOT5) from Arabidopsis thaliana (Mouse-ear cress).